A 92-amino-acid chain; its full sequence is Small ribosomal subunit protein uS19 (92 aa).

Belongs to the universal ribosomal protein uS19 family.

Its function is as follows. Protein S19 forms a complex with S13 that binds strongly to the 16S ribosomal RNA. This is Small ribosomal subunit protein uS19 from Mycoplasmopsis synoviae (strain 53) (Mycoplasma synoviae).